Here is a 147-residue protein sequence, read N- to C-terminus: Nucleoside diphosphate kinase (147 aa).

ATP contacts are provided by Lys9, Phe57, Arg85, Thr91, Arg102, and Asn112. His115 (pros-phosphohistidine intermediate) is an active-site residue.

It belongs to the NDK family. Homotetramer. Mg(2+) serves as cofactor.

Its subcellular location is the cytoplasm. The enzyme catalyses a 2'-deoxyribonucleoside 5'-diphosphate + ATP = a 2'-deoxyribonucleoside 5'-triphosphate + ADP. It catalyses the reaction a ribonucleoside 5'-diphosphate + ATP = a ribonucleoside 5'-triphosphate + ADP. In terms of biological role, major role in the synthesis of nucleoside triphosphates other than ATP. The ATP gamma phosphate is transferred to the NDP beta phosphate via a ping-pong mechanism, using a phosphorylated active-site intermediate. The sequence is that of Nucleoside diphosphate kinase from Kosmotoga olearia (strain ATCC BAA-1733 / DSM 21960 / TBF 19.5.1).